Reading from the N-terminus, the 511-residue chain is Caspase-8 (511 aa).

A propeptide spanning residues 1–242 (MSGHNILTQL…MDGNGIANES (242 aa)) is cleaved from the precursor. Residues His352 and Cys393 contribute to the active site. The propeptide occupies 406–415 (KINASTKSPC).

This sequence belongs to the peptidase C14A family. As to quaternary structure, heterotetramer that consists of two anti-parallel arranged heterodimers, each one formed by a 15 kDa (caspase-8 subunit p15) and a 10 kDa (caspase-8 subunit p10) subunit. Interacts with the N-terminus of Fadd.

It localises to the cytoplasm. The enzyme catalyses Strict requirement for Asp at position P1 and has a preferred cleavage sequence of (Leu/Asp/Val)-Glu-Thr-Asp-|-(Gly/Ser/Ala).. Functionally, effector of the programmed cell death (PCD) activators rpr, grim and W. May play an apoptotic role in the germline as well as soma. Role in immune response, required to resist Gram-negative bacterial infections by regulating DptA. Fadd interacts with Dredd, Fadd promotes cleavage of Dredd and is necessary and sufficient for enhancing Dredd-induced apoptosis. This is Caspase-8 from Drosophila pseudoobscura pseudoobscura (Fruit fly).